Here is a 684-residue protein sequence, read N- to C-terminus: Endo-1,4-beta-xylanase A (684 aa).

The N-terminal stretch at 1 to 34 (MMRSLKSRKLVFILAMLFLINAIVSLKFITYSSA) is a signal peptide. CBM-cenC domains are found at residues 40 to 190 (KSKY…IKDL) and 193 to 342 (AYVL…ISDE). In terms of domain architecture, GH10 spans 350–678 (DYNLPSLCEK…KFAFWSLIDP (329 aa)). Glutamate 490 functions as the Proton donor in the catalytic mechanism. Glutamate 598 serves as the catalytic Nucleophile.

It belongs to the glycosyl hydrolase 10 (cellulase F) family.

The enzyme catalyses Endohydrolysis of (1-&gt;4)-beta-D-xylosidic linkages in xylans.. It participates in glycan degradation; xylan degradation. This Caldicellulosiruptor sp. (strain Rt8B.4) protein is Endo-1,4-beta-xylanase A (xynA).